Reading from the N-terminus, the 483-residue chain is Aspartyl/glutamyl-tRNA(Asn/Gln) amidotransferase subunit B (483 aa).

This sequence belongs to the GatB/GatE family. GatB subfamily. As to quaternary structure, heterotrimer of A, B and C subunits.

It carries out the reaction L-glutamyl-tRNA(Gln) + L-glutamine + ATP + H2O = L-glutaminyl-tRNA(Gln) + L-glutamate + ADP + phosphate + H(+). It catalyses the reaction L-aspartyl-tRNA(Asn) + L-glutamine + ATP + H2O = L-asparaginyl-tRNA(Asn) + L-glutamate + ADP + phosphate + 2 H(+). In terms of biological role, allows the formation of correctly charged Asn-tRNA(Asn) or Gln-tRNA(Gln) through the transamidation of misacylated Asp-tRNA(Asn) or Glu-tRNA(Gln) in organisms which lack either or both of asparaginyl-tRNA or glutaminyl-tRNA synthetases. The reaction takes place in the presence of glutamine and ATP through an activated phospho-Asp-tRNA(Asn) or phospho-Glu-tRNA(Gln). The polypeptide is Aspartyl/glutamyl-tRNA(Asn/Gln) amidotransferase subunit B (Rickettsia conorii (strain ATCC VR-613 / Malish 7)).